The sequence spans 148 residues: MKAAGILTLIGCLVTGAESKIYTRCKLAKIFSRAGLDNYWGFSLGNWICMAYYESGYNTTAQTVLDDGSIDYGIFQINSFAWCRRGKLKENNHCHVACSALVTDDLTDAIICAKKIVKETQGMNYWQGWKKHCEGRDLSDWKKDCEVS.

The N-terminal stretch at 1–19 (MKAAGILTLIGCLVTGAES) is a signal peptide. Positions 20–148 (KIYTRCKLAK…SDWKKDCEVS (129 aa)) constitute a C-type lysozyme domain. 4 disulfide bridges follow: Cys25-Cys145, Cys49-Cys133, Cys83-Cys98, and Cys94-Cys112. Glu54 is an active-site residue. Asn58 carries N-linked (GlcNAc...) asparagine glycosylation. Residue Asp71 is part of the active site.

This sequence belongs to the glycosyl hydrolase 22 family. Monomer. Expressed in testis, epididymis and placenta.

Its subcellular location is the secreted. It carries out the reaction Hydrolysis of (1-&gt;4)-beta-linkages between N-acetylmuramic acid and N-acetyl-D-glucosamine residues in a peptidoglycan and between N-acetyl-D-glucosamine residues in chitodextrins.. This chain is Lysozyme-like protein 2 (LYZL2), found in Homo sapiens (Human).